Reading from the N-terminus, the 455-residue chain is Protein chibby homolog 2 (455 aa).

Ser41, Ser86, Ser89, Ser97, Ser124, Ser144, Ser148, and Ser150 each carry phosphoserine. A coiled-coil region spans residues 160–197 (KRLAKECLLQENKTLREENRALREENRMLRKENKILQV). Residues Ser211 and Ser225 each carry the phosphoserine modification. Positions 240 to 266 (GRENSTLQLLREENRALQQLLEQRKAY) form a coiled coil. The tract at residues 267–318 (WAQPDEKAASTEEIKPISSPHEEPHGLLPDPGPGLPSPFEEPKGLPAPPDDS) is disordered. Residues 270–291 (PDEKAASTEEIKPISSPHEEPH) are compositionally biased toward basic and acidic residues. Residues Ser276 and Ser332 each carry the phosphoserine modification. Positions 350 to 421 (SQSLELLREM…KLKLQQKLVI (72 aa)) form a coiled coil.

It belongs to the chibby family. SPERT subfamily. In terms of assembly, homodimer. Binds to NEK1.

The chain is Protein chibby homolog 2 (CBY2) from Bos taurus (Bovine).